Reading from the N-terminus, the 528-residue chain is Probable rhamnogalacturonate lyase A (528 aa).

A signal peptide spans 1–20 (MLSKATLLLSLPFWARVANA). N46 carries N-linked (GlcNAc...) asparagine glycosylation. Intrachain disulfides connect C50–C93 and C184–C193. N351 carries an N-linked (GlcNAc...) asparagine glycan.

This sequence belongs to the polysaccharide lyase 4 family.

Its subcellular location is the secreted. The catalysed reaction is Endotype eliminative cleavage of L-alpha-rhamnopyranosyl-(1-&gt;4)-alpha-D-galactopyranosyluronic acid bonds of rhamnogalacturonan I domains in ramified hairy regions of pectin leaving L-rhamnopyranose at the reducing end and 4-deoxy-4,5-unsaturated D-galactopyranosyluronic acid at the non-reducing end.. Its function is as follows. Pectinolytic enzymes consist of four classes of enzymes: pectin lyase, polygalacturonase, pectin methylesterase and rhamnogalacturonase. Degrades the rhamnogalacturonan I (RG-I) backbone of pectin. The protein is Probable rhamnogalacturonate lyase A (rglA) of Neosartorya fischeri (strain ATCC 1020 / DSM 3700 / CBS 544.65 / FGSC A1164 / JCM 1740 / NRRL 181 / WB 181) (Aspergillus fischerianus).